The chain runs to 525 residues: 2,3-bisphosphoglycerate-independent phosphoglycerate mutase 2 (525 aa).

The Mn(2+) site is built by aspartate 14 and serine 64. Residue serine 64 is the Phosphoserine intermediate of the active site. Substrate-binding positions include histidine 125, 155 to 156, arginine 187, arginine 193, 274 to 277, and lysine 347; these read RD and RADR. Aspartate 414, histidine 418, aspartate 455, histidine 456, and histidine 474 together coordinate Mn(2+).

Belongs to the BPG-independent phosphoglycerate mutase family. Mn(2+) is required as a cofactor.

The enzyme catalyses (2R)-2-phosphoglycerate = (2R)-3-phosphoglycerate. It participates in carbohydrate degradation; glycolysis; pyruvate from D-glyceraldehyde 3-phosphate: step 3/5. Functionally, catalyzes the interconversion of 2-phosphoglycerate and 3-phosphoglycerate. The polypeptide is 2,3-bisphosphoglycerate-independent phosphoglycerate mutase 2 (Methanosarcina barkeri (strain Fusaro / DSM 804)).